The primary structure comprises 212 residues: Thymidylate kinase (212 aa).

11-18 lines the ATP pocket; the sequence is GPEGAGKT.

It belongs to the thymidylate kinase family.

The catalysed reaction is dTMP + ATP = dTDP + ADP. In terms of biological role, phosphorylation of dTMP to form dTDP in both de novo and salvage pathways of dTTP synthesis. The chain is Thymidylate kinase from Streptococcus pneumoniae (strain P1031).